The chain runs to 85 residues: Probable [Fe-S]-dependent transcriptional repressor (85 aa).

C56, C61, C64, and C71 together coordinate iron-sulfur cluster.

The protein belongs to the FeoC family.

In terms of biological role, may function as a transcriptional regulator that controls feoABC expression. This Yersinia pseudotuberculosis serotype O:1b (strain IP 31758) protein is Probable [Fe-S]-dependent transcriptional repressor.